Reading from the N-terminus, the 502-residue chain is Probable RNA exonuclease C9B6.11c (502 aa).

Residues 338-379 (SELEEKNASTKTENDSNEDDKEECQSSSTSSVPESTASTPKK) form a disordered region. Residues 341–351 (EEKNASTKTEN) are compositionally biased toward basic and acidic residues. A compositionally biased stretch (low complexity) spans 363–376 (SSSTSSVPESTAST).

This sequence belongs to the CCR4/nocturin family.

Its subcellular location is the cytoplasm. The protein localises to the nucleus. The sequence is that of Probable RNA exonuclease C9B6.11c from Schizosaccharomyces pombe (strain 972 / ATCC 24843) (Fission yeast).